Reading from the N-terminus, the 397-residue chain is Bifunctional enzyme IspD/IspF (397 aa).

Residues 1-236 (MSIAAVILAA…QKKMQMFPDI (236 aa)) form a 2-C-methyl-D-erythritol 4-phosphate cytidylyltransferase region. The interval 237-397 (RTGNGYDVHS…NVLYPGEIPK (161 aa)) is 2-C-methyl-D-erythritol 2,4-cyclodiphosphate synthase. Residues D243 and H245 each contribute to the a divalent metal cation site. 4-CDP-2-C-methyl-D-erythritol 2-phosphate contacts are provided by residues 243–245 (DVH) and 269–270 (HS). H277 provides a ligand contact to a divalent metal cation. 4-CDP-2-C-methyl-D-erythritol 2-phosphate-binding positions include 291–293 (DIG), 367–370 (TTNE), F374, and R377.

It in the N-terminal section; belongs to the IspD/TarI cytidylyltransferase family. IspD subfamily. The protein in the C-terminal section; belongs to the IspF family. A divalent metal cation serves as cofactor.

It catalyses the reaction 2-C-methyl-D-erythritol 4-phosphate + CTP + H(+) = 4-CDP-2-C-methyl-D-erythritol + diphosphate. It carries out the reaction 4-CDP-2-C-methyl-D-erythritol 2-phosphate = 2-C-methyl-D-erythritol 2,4-cyclic diphosphate + CMP. Its pathway is isoprenoid biosynthesis; isopentenyl diphosphate biosynthesis via DXP pathway; isopentenyl diphosphate from 1-deoxy-D-xylulose 5-phosphate: step 2/6. It participates in isoprenoid biosynthesis; isopentenyl diphosphate biosynthesis via DXP pathway; isopentenyl diphosphate from 1-deoxy-D-xylulose 5-phosphate: step 4/6. Bifunctional enzyme that catalyzes the formation of 4-diphosphocytidyl-2-C-methyl-D-erythritol from CTP and 2-C-methyl-D-erythritol 4-phosphate (MEP) (IspD), and catalyzes the conversion of 4-diphosphocytidyl-2-C-methyl-D-erythritol 2-phosphate (CDP-ME2P) to 2-C-methyl-D-erythritol 2,4-cyclodiphosphate (ME-CPP) with a corresponding release of cytidine 5-monophosphate (CMP) (IspF). The polypeptide is Bifunctional enzyme IspD/IspF (Bartonella henselae (strain ATCC 49882 / DSM 28221 / CCUG 30454 / Houston 1) (Rochalimaea henselae)).